A 422-amino-acid chain; its full sequence is MLKAIILIGGPQKGTRFRPLSFEVPKPLFPVAGVPMLQHHIEACAQVPDMKEIMLIGFYQPNDELNRFIYSAQQEFKIPIRYLQEFAALGTGGGIYHFRDQILSGGPAAFFLMNADVCSEFPLLEMLQFHRQHGENHCGVLLGTTANRTQSLNYGCIVENHETNEVLHFVEKPSTFVSDIINCGIYLFTPDIFAHIGKVFQRNQQEKIQEELTHGRQMPEVVRLEQDIFTALAGQKKLFVYKTQHFWSQIKSAGSAIYASRLYLKQYHQTHPERLATNQGGTPKITGDVYIHPTANIDPSAVLGPNVSIGKGVTIGGGVRVRESIILHGAVLQDHCCVLNSIVGWDSTVGKWARVEGTPSDPNPNDPYAKIDSETLFRDGGLTPSITILGCNVNIPSEVIIRNSIVLPHKDLNRSFKNQIIL.

The segment at 2-253 (LKAIILIGGP…QHFWSQIKSA (252 aa)) is substrate-binding domain. GDP-alpha-D-mannose-binding residues include Glu85 and Gln249. A hexapeptide repeat domain region spans residues 275 to 422 (LATNQGGTPK…NRSFKNQIIL (148 aa)). The segment at 358-386 (TPSDPNPNDPYAKIDSETLFRDGGLTPSI) is C-loop.

The protein belongs to the transferase hexapeptide repeat family. In terms of assembly, component of the GMPPA-GMPPB mannose-1-phosphate guanylyltransferase complex composed of 4 GMPPA subunits and 8 GMPPB subunits; the complex is organized into three layers, a central layer made up of 2 GMPPA dimers sandwiched between two layers each made up of 2 GMPPB dimers.

It participates in nucleotide-sugar biosynthesis; GDP-alpha-D-mannose biosynthesis; GDP-alpha-D-mannose from alpha-D-mannose 1-phosphate (GTP route): step 1/1. Its function is as follows. Regulatory subunit of the GMPPA-GMPPB mannose-1-phosphate guanylyltransferase complex; reduces the catalytic activity of GMPPB when part of the complex. Mediates allosteric feedback inhibition of GMPPB catalytic activity upon binding GDP-alpha-D-mannose. Together with GMPPB regulates GDP-alpha-D-mannose levels. One of two paralogs (gmppaa and gmppab) that may have redundant functions. This is Mannose-1-phosphate guanylyltransferase regulatory subunit alpha-B (gmppab) from Danio rerio (Zebrafish).